A 607-amino-acid chain; its full sequence is Elongation factor 4 (607 aa).

Positions 11–193 (EKIRNFSIIA…QIVEKVPAPT (183 aa)) constitute a tr-type G domain. Residues 23–28 (DHGKST) and 140–143 (NKID) each bind GTP.

It belongs to the TRAFAC class translation factor GTPase superfamily. Classic translation factor GTPase family. LepA subfamily.

Its subcellular location is the cell membrane. It catalyses the reaction GTP + H2O = GDP + phosphate + H(+). In terms of biological role, required for accurate and efficient protein synthesis under certain stress conditions. May act as a fidelity factor of the translation reaction, by catalyzing a one-codon backward translocation of tRNAs on improperly translocated ribosomes. Back-translocation proceeds from a post-translocation (POST) complex to a pre-translocation (PRE) complex, thus giving elongation factor G a second chance to translocate the tRNAs correctly. Binds to ribosomes in a GTP-dependent manner. In Streptococcus pneumoniae (strain P1031), this protein is Elongation factor 4.